Reading from the N-terminus, the 163-residue chain is MAKKNAKKSKNPPATIARNKRANFDYKFEEKFEAGLSLMGWEVKSIRVGKVNLSESYVFLRDGEAYLFGCTITPLNTASTHVVCDPMRDRKLLLNRRELDKLQGLVERQGYSIVPISMYWRKNAWVKLEIGLGKGKKEHDKRDDTKEREWKIEKSRTMKHAAR.

Over residues 135-156 (GKKEHDKRDDTKEREWKIEKSR) the composition is skewed to basic and acidic residues. The interval 135–163 (GKKEHDKRDDTKEREWKIEKSRTMKHAAR) is disordered.

Belongs to the SmpB family.

It localises to the cytoplasm. Functionally, required for rescue of stalled ribosomes mediated by trans-translation. Binds to transfer-messenger RNA (tmRNA), required for stable association of tmRNA with ribosomes. tmRNA and SmpB together mimic tRNA shape, replacing the anticodon stem-loop with SmpB. tmRNA is encoded by the ssrA gene; the 2 termini fold to resemble tRNA(Ala) and it encodes a 'tag peptide', a short internal open reading frame. During trans-translation Ala-aminoacylated tmRNA acts like a tRNA, entering the A-site of stalled ribosomes, displacing the stalled mRNA. The ribosome then switches to translate the ORF on the tmRNA; the nascent peptide is terminated with the 'tag peptide' encoded by the tmRNA and targeted for degradation. The ribosome is freed to recommence translation, which seems to be the essential function of trans-translation. The polypeptide is SsrA-binding protein (Shewanella loihica (strain ATCC BAA-1088 / PV-4)).